Here is a 426-residue protein sequence, read N- to C-terminus: Growth-regulating factor 9 (426 aa).

Residues 92–127 enclose the QLQ domain; the sequence is PFTPSQWMELEHQALIYKYLNAKAPIPSSLLISISK. The 45-residue stretch at 151 to 195 folds into the WRC domain; the sequence is DPEPGRCRRTDGKKWRCSKEAMADHKYCERHINRNRHRSRKPVEN. 2 consecutive short sequence motifs (bipartite nuclear localization signal) follow at residues 156–166 and 184–191; these read RCRRTDGKKWR and RNRHRSRK. The interval 184–222 is disordered; it reads RNRHRSRKPVENQSRKTVKETPCAGSLPSSVGQGSFKKA. Residues 191–202 show a composition bias toward basic and acidic residues; that stretch reads KPVENQSRKTVK.

Belongs to the GRF family.

Its subcellular location is the nucleus. Transcription activator that plays a regulatory role in gibberellin-induced stem elongation. The sequence is that of Growth-regulating factor 9 (GRF9) from Oryza sativa subsp. japonica (Rice).